The following is a 591-amino-acid chain: Aspartate--tRNA ligase (591 aa).

Glu-176 contributes to the L-aspartate binding site. Positions 200-203 are aspartate; it reads QILK. Position 222 (Arg-222) interacts with L-aspartate. Residues 222–224 and Gln-231 each bind ATP; that span reads RDE. Residue His-450 coordinates L-aspartate. Residue Glu-484 coordinates ATP. An L-aspartate-binding site is contributed by Arg-491. 536–539 contributes to the ATP binding site; the sequence is GLDR.

Belongs to the class-II aminoacyl-tRNA synthetase family. Type 1 subfamily. Homodimer.

The protein localises to the cytoplasm. The enzyme catalyses tRNA(Asp) + L-aspartate + ATP = L-aspartyl-tRNA(Asp) + AMP + diphosphate. In terms of biological role, catalyzes the attachment of L-aspartate to tRNA(Asp) in a two-step reaction: L-aspartate is first activated by ATP to form Asp-AMP and then transferred to the acceptor end of tRNA(Asp). This is Aspartate--tRNA ligase from Listeria monocytogenes serotype 4b (strain F2365).